The chain runs to 118 residues: Large ribosomal subunit protein uL18 (118 aa).

The span at 1–10 (MKTTRRDATR) shows a compositional bias: basic and acidic residues. Residues 1-20 (MKTTRRDATRSRHQRVRRKV) form a disordered region. Residues 11–20 (SRHQRVRRKV) show a composition bias toward basic residues.

It belongs to the universal ribosomal protein uL18 family. In terms of assembly, part of the 50S ribosomal subunit; part of the 5S rRNA/L5/L18/L25 subcomplex. Contacts the 5S and 23S rRNAs.

In terms of biological role, this is one of the proteins that bind and probably mediate the attachment of the 5S RNA into the large ribosomal subunit, where it forms part of the central protuberance. This is Large ribosomal subunit protein uL18 from Acaryochloris marina (strain MBIC 11017).